A 440-amino-acid chain; its full sequence is Homocitrate synthase, mitochondrial (440 aa).

Positions 1 to 23 (MSENNEFQSVTESTTAPTTSNPY) are enriched in polar residues. Residues 1–27 (MSENNEFQSVTESTTAPTTSNPYGPNP) are disordered. Positions 37–290 (FQLIDSTLRE…RSKYKLHKIR (254 aa)) constitute a Pyruvate carboxyltransferase domain. Arg-45 serves as a coordination point for 2-oxoglutarate. A Mg(2+)-binding site is contributed by Glu-46. 2-oxoglutarate contacts are provided by His-105, Arg-165, and Thr-199. Residues His-226 and His-228 each contribute to the Mg(2+) site. His-323 (proton acceptor) is an active-site residue. The residue at position 399 (Ser-399) is a Phosphoserine. Residue Thr-410 is modified to Phosphothreonine.

It belongs to the alpha-IPM synthase/homocitrate synthase family. Homocitrate synthase LYS20/LYS21 subfamily. Mg(2+) serves as cofactor. It depends on Mn(2+) as a cofactor.

Its subcellular location is the mitochondrion. It carries out the reaction acetyl-CoA + 2-oxoglutarate + H2O = (2R)-homocitrate + CoA + H(+). It participates in amino-acid biosynthesis; L-lysine biosynthesis via AAA pathway; L-alpha-aminoadipate from 2-oxoglutarate: step 1/5. Catalyzes the aldol-type condensation of 2-oxoglutarate with acetyl-CoA to yield homocitrate. Carries out the first step of the alpha-aminoadipate (AAA) lysine biosynthesis pathway. The protein is Homocitrate synthase, mitochondrial (LYS21) of Saccharomyces cerevisiae (strain ATCC 204508 / S288c) (Baker's yeast).